A 116-amino-acid polypeptide reads, in one-letter code: Diuretic hormone class 2 (116 aa).

The N-terminal stretch at 1–25 is a signal peptide; that stretch reads MTNRCACFALAFLLFCLLAISSIEA. A propeptide spanning residues 26–75 is cleaved from the precursor; it reads APMPSQSNGGYGGAGYNELEEVPDDLLMELMTRFGRTIIRARNDLENSKR. The residue at position 106 (Pro106) is a Proline amide. A propeptide spanning residues 112–116 is cleaved from the precursor; that stretch reads SETDV.

It is found in the secreted. Functionally, regulation of fluid secretion. Stimulates Malpighian tubules fluid secretion by activating the apical membrane V-ATPase via cyclic AMP of principal cells in the main secretory segment. This chain is Diuretic hormone class 2 (Dh31), found in Drosophila melanogaster (Fruit fly).